The following is a 237-amino-acid chain: Undecaprenyl-diphosphatase (237 aa).

7 consecutive transmembrane segments (helical) span residues 38–58 (QTAVLHLGTLVSVVLFAFDGI), 65–85 (WRIILNLIVSTIPAGVFGVLF), 92–112 (LFSSPRFLPLFFSVTALILMF), 126–146 (MSFLDALLVGIAQLFALFPGI), 166–186 (ALQYSFLMSIPVVLGAGILGL), 191–211 (ITILAPIFAFLSGLFALYVLS), and 217–237 (GKIWQFSYYCLFVAILSYLVG).

The protein belongs to the UppP family.

The protein localises to the cell inner membrane. The enzyme catalyses di-trans,octa-cis-undecaprenyl diphosphate + H2O = di-trans,octa-cis-undecaprenyl phosphate + phosphate + H(+). In terms of biological role, catalyzes the dephosphorylation of undecaprenyl diphosphate (UPP). Confers resistance to bacitracin. This Thermotoga petrophila (strain ATCC BAA-488 / DSM 13995 / JCM 10881 / RKU-1) protein is Undecaprenyl-diphosphatase.